A 303-amino-acid chain; its full sequence is N-acetyl-D-glucosamine kinase (303 aa).

ATP-binding positions include 4 to 11 (GFDIGGTK) and 133 to 140 (GVGGGLIF). Zn(2+)-binding residues include H157, C177, C179, and C184.

It belongs to the ROK (NagC/XylR) family. NagK subfamily.

It catalyses the reaction N-acetyl-D-glucosamine + ATP = N-acetyl-D-glucosamine 6-phosphate + ADP + H(+). It functions in the pathway cell wall biogenesis; peptidoglycan recycling. Functionally, catalyzes the phosphorylation of N-acetyl-D-glucosamine (GlcNAc) derived from cell-wall degradation, yielding GlcNAc-6-P. In Escherichia fergusonii (strain ATCC 35469 / DSM 13698 / CCUG 18766 / IAM 14443 / JCM 21226 / LMG 7866 / NBRC 102419 / NCTC 12128 / CDC 0568-73), this protein is N-acetyl-D-glucosamine kinase.